Here is a 340-residue protein sequence, read N- to C-terminus: Heat-inducible transcription repressor HrcA (340 aa).

It belongs to the HrcA family.

Functionally, negative regulator of class I heat shock genes (grpE-dnaK-dnaJ and groELS operons). Prevents heat-shock induction of these operons. In Clavibacter michiganensis subsp. michiganensis (strain NCPPB 382), this protein is Heat-inducible transcription repressor HrcA.